Consider the following 695-residue polypeptide: Probable Rho-GTPase-activating protein 7 (695 aa).

Residues 1-11 (MLSAPSSSTTP) are compositionally biased toward low complexity. Residues 1-26 (MLSAPSSSTTPASPPTSPPNTTSSDD) form a disordered region. Residues 33–307 (PKVEAILNSE…ALDNINANTD (275 aa)) enclose the F-BAR domain. The segment at 320 to 499 (EDNKNPTDAS…SVSPQPSSPT (180 aa)) is disordered. Composition is skewed to polar residues over residues 336-348 (PPSSYGTGSSAGK) and 366-382 (PLQNTNPAPSTFPNPSV). Low complexity-rich tracts occupy residues 383-432 (ASPA…RTSS), 458-467 (PIQTTTIQTS), and 488-499 (PTSVSPQPSSPT). Residues serine 496 and serine 497 each carry the phosphoserine modification. The Rho-GAP domain occupies 506-692 (ARLDAIILRE…ILIDYCFTIF (187 aa)).

In Schizosaccharomyces pombe (strain 972 / ATCC 24843) (Fission yeast), this protein is Probable Rho-GTPase-activating protein 7 (rga7).